The following is a 338-amino-acid chain: 3-dehydroquinate synthase (338 aa).

NAD(+)-binding positions include 58 to 63, 92 to 96, 116 to 117, lysine 129, and lysine 138; these read DGERAK, GTTGD, and TT. Residues glutamate 169, histidine 229, and histidine 245 each coordinate Zn(2+).

The protein belongs to the sugar phosphate cyclases superfamily. Dehydroquinate synthase family. NAD(+) is required as a cofactor. Requires Co(2+) as cofactor. Zn(2+) serves as cofactor.

The protein resides in the cytoplasm. It carries out the reaction 7-phospho-2-dehydro-3-deoxy-D-arabino-heptonate = 3-dehydroquinate + phosphate. The protein operates within metabolic intermediate biosynthesis; chorismate biosynthesis; chorismate from D-erythrose 4-phosphate and phosphoenolpyruvate: step 2/7. Functionally, catalyzes the conversion of 3-deoxy-D-arabino-heptulosonate 7-phosphate (DAHP) to dehydroquinate (DHQ). The polypeptide is 3-dehydroquinate synthase (Picrophilus torridus (strain ATCC 700027 / DSM 9790 / JCM 10055 / NBRC 100828 / KAW 2/3)).